Consider the following 324-residue polypeptide: Acetyl-coenzyme A carboxylase carboxyl transferase subunit alpha (324 aa).

A CoA carboxyltransferase C-terminal domain is found at lysine 37–lysine 291.

Belongs to the AccA family. Acetyl-CoA carboxylase is a heterohexamer composed of biotin carboxyl carrier protein (AccB), biotin carboxylase (AccC) and two subunits each of ACCase subunit alpha (AccA) and ACCase subunit beta (AccD).

Its subcellular location is the cytoplasm. The catalysed reaction is N(6)-carboxybiotinyl-L-lysyl-[protein] + acetyl-CoA = N(6)-biotinyl-L-lysyl-[protein] + malonyl-CoA. It functions in the pathway lipid metabolism; malonyl-CoA biosynthesis; malonyl-CoA from acetyl-CoA: step 1/1. Its function is as follows. Component of the acetyl coenzyme A carboxylase (ACC) complex. First, biotin carboxylase catalyzes the carboxylation of biotin on its carrier protein (BCCP) and then the CO(2) group is transferred by the carboxyltransferase to acetyl-CoA to form malonyl-CoA. The protein is Acetyl-coenzyme A carboxylase carboxyl transferase subunit alpha of Chlamydia trachomatis serovar L2 (strain ATCC VR-902B / DSM 19102 / 434/Bu).